A 491-amino-acid chain; its full sequence is Delayed-rectifier potassium channel regulatory subunit KCNS3 (491 aa).

The Cytoplasmic portion of the chain corresponds to 1–182; it reads MVFGEFFHRP…IRMENPAYCL (182 aa). Residues 183–204 traverse the membrane as a helical segment; sequence SAKLIAISSLSVVLASIVAMCV. The Extracellular segment spans residues 205 to 220; the sequence is HSMSEFQNEDGEVDDP. The helical transmembrane segment at 221–243 threads the bilayer; the sequence is VLEGVEIACIAWFTGELAVRLVA. The Cytoplasmic segment spans residues 244–254; it reads APCQKKFWKNP. A helical transmembrane segment spans residues 255–275; sequence LNIIDFVSIIPFYATLAVDTK. Residues 276 to 285 are Extracellular-facing; it reads EEESEDIENM. A helical; Voltage-sensor membrane pass occupies residues 286-306; sequence GKVVQILRLMRIFRILKLARH. Residues 307 to 321 are Cytoplasmic-facing; sequence SVGLRSLGATLRHSY. Residues 322–343 form a helical membrane-spanning segment; sequence HEVGLLLLFLSVGISIFSVLIY. Residues 344–357 lie on the Extracellular side of the membrane; that stretch reads SVEKDDHTSSLTSI. An intramembrane region (helical) is located at residues 358–369; that stretch reads PICWWWATISMT. Positions 370–375 match the Selectivity filter motif; it reads TVGYGD. An intramembrane segment occupies 370-377; it reads TVGYGDTH. The Extracellular segment spans residues 378-384; sequence PVTLAGK. Residues 385 to 413 form a helical membrane-spanning segment; sequence LIASTCIICGILVVALPITIIFNKFSKYY. The Cytoplasmic segment spans residues 414–491; that stretch reads QKQKDIDVDQ…TASLENCTAK (78 aa).

Belongs to the potassium channel family. S (TC 1.A.1.2) subfamily. Kv9.3/KCNS3 sub-subfamily. In terms of assembly, heterotetramer with KCNB1. Does not form homomultimers.

It localises to the cell membrane. In terms of biological role, potassium channel regulatory subunit that modulates the delayed rectifier potassium channel activity of KCNB1 by namely slowing down the deactivation and inactivation time constants. While it does not form functional channel on its own, it can form functional heterotetrameric channels with KCNB1. This chain is Delayed-rectifier potassium channel regulatory subunit KCNS3, found in Oryctolagus cuniculus (Rabbit).